The primary structure comprises 210 residues: Glycerol-3-phosphate acyltransferase (210 aa).

The next 5 membrane-spanning stretches (helical) occupy residues 1 to 21, 53 to 73, 87 to 107, 122 to 142, and 147 to 167; these read MLLS…FPAG, GPAL…VVAA, IAWL…LPVW, VLLA…LLLL, and IVSL…LILP.

Belongs to the PlsY family. As to quaternary structure, probably interacts with PlsX.

The protein resides in the cell inner membrane. It catalyses the reaction an acyl phosphate + sn-glycerol 3-phosphate = a 1-acyl-sn-glycero-3-phosphate + phosphate. The protein operates within lipid metabolism; phospholipid metabolism. Catalyzes the transfer of an acyl group from acyl-phosphate (acyl-PO(4)) to glycerol-3-phosphate (G3P) to form lysophosphatidic acid (LPA). This enzyme utilizes acyl-phosphate as fatty acyl donor, but not acyl-CoA or acyl-ACP. The protein is Glycerol-3-phosphate acyltransferase of Synechococcus elongatus (strain ATCC 33912 / PCC 7942 / FACHB-805) (Anacystis nidulans R2).